A 359-amino-acid chain; its full sequence is Probable dual-specificity RNA methyltransferase RlmN (359 aa).

Glu-91 acts as the Proton acceptor in catalysis. A Radical SAM core domain is found at 97–329 (QHYGHSVCVT…KKNGVNCVVR (233 aa)). A disulfide bridge links Cys-104 with Cys-340. The [4Fe-4S] cluster site is built by Cys-111, Cys-115, and Cys-118. S-adenosyl-L-methionine is bound by residues 163–164 (GE), Ser-195, 218–220 (SLH), and Asn-296. Cys-340 serves as the catalytic S-methylcysteine intermediate.

Belongs to the radical SAM superfamily. RlmN family. [4Fe-4S] cluster serves as cofactor.

It is found in the cytoplasm. It catalyses the reaction adenosine(2503) in 23S rRNA + 2 reduced [2Fe-2S]-[ferredoxin] + 2 S-adenosyl-L-methionine = 2-methyladenosine(2503) in 23S rRNA + 5'-deoxyadenosine + L-methionine + 2 oxidized [2Fe-2S]-[ferredoxin] + S-adenosyl-L-homocysteine. The enzyme catalyses adenosine(37) in tRNA + 2 reduced [2Fe-2S]-[ferredoxin] + 2 S-adenosyl-L-methionine = 2-methyladenosine(37) in tRNA + 5'-deoxyadenosine + L-methionine + 2 oxidized [2Fe-2S]-[ferredoxin] + S-adenosyl-L-homocysteine. Functionally, specifically methylates position 2 of adenine 2503 in 23S rRNA and position 2 of adenine 37 in tRNAs. The sequence is that of Probable dual-specificity RNA methyltransferase RlmN from Streptococcus pyogenes serotype M18 (strain MGAS8232).